The primary structure comprises 178 residues: Cell division protein ZapC (178 aa).

The protein belongs to the ZapC family. Interacts directly with FtsZ.

Its subcellular location is the cytoplasm. In terms of biological role, contributes to the efficiency of the cell division process by stabilizing the polymeric form of the cell division protein FtsZ. Acts by promoting interactions between FtsZ protofilaments and suppressing the GTPase activity of FtsZ. The protein is Cell division protein ZapC of Pseudoalteromonas atlantica (strain T6c / ATCC BAA-1087).